Consider the following 1437-residue polypeptide: FYVE and coiled-coil domain-containing protein 1 (1437 aa).

Alanine 2 carries the post-translational modification N-acetylalanine. Positions 4–30 form a coiled coil; sequence SSTETQLQRIIRDLQDAATELSHEFKE. Positions 36 to 169 constitute an RUN domain; the sequence is TDDSTSLHKF…VQFDLAPRGY (134 aa). A Phosphoserine modification is found at serine 196. 3 coiled-coil regions span residues 223-270, 305-846, and 873-1110; these read SLNN…VSRQ, SQAT…SEGA, and ALTA…KDAL. Residue threonine 372 is modified to Phosphothreonine. Position 837 is a phosphoserine (serine 837). The segment at 1132–1190 adopts an FYVE-type zinc-finger fold; sequence DMEVNHCHDCKREFSWIVRRHHCRICGRIFCYYCCNNYVVTKPSGKKERCCRACFQKFG. The Zn(2+) site is built by cysteine 1138, cysteine 1141, cysteine 1154, cysteine 1157, cysteine 1162, cysteine 1165, cysteine 1182, and cysteine 1185. Disordered stretches follow at residues 1191 to 1227 and 1253 to 1289; these read EGSG…SQGI and SGSS…TEDV. The segment covering 1194 to 1206 has biased composition (low complexity); it reads GSNDSSGSGTSQG. Polar residues-rich tracts occupy residues 1218 to 1227 and 1253 to 1283; these read SPQSIGSQGI and SGSS…SLTP. The region spanning 1296–1425 is the GOLD domain; the sequence is EICLLKSGEL…SKKVLYHLTV (130 aa).

As to quaternary structure, can form homodimers. Interacts (via C-terminus) with MAP1LC3B. Interacts with RAB7A; the interaction with RAB7A induces FYCO1 recruitment to late endosomal/lysosomal compartments. As to expression, expressed in heart and testis. Expressed in the eye lens.

The protein resides in the cytoplasmic vesicle. It is found in the autophagosome. It localises to the endosome. Its subcellular location is the lysosome. Functionally, may mediate microtubule plus end-directed vesicle transport. The polypeptide is FYVE and coiled-coil domain-containing protein 1 (Fyco1) (Mus musculus (Mouse)).